The following is a 141-amino-acid chain: Large ribosomal subunit protein uL11 (141 aa).

It belongs to the universal ribosomal protein uL11 family. In terms of assembly, part of the ribosomal stalk of the 50S ribosomal subunit. Interacts with L10 and the large rRNA to form the base of the stalk. L10 forms an elongated spine to which L12 dimers bind in a sequential fashion forming a multimeric L10(L12)X complex. One or more lysine residues are methylated.

Functionally, forms part of the ribosomal stalk which helps the ribosome interact with GTP-bound translation factors. The protein is Large ribosomal subunit protein uL11 of Pediococcus pentosaceus (strain ATCC 25745 / CCUG 21536 / LMG 10740 / 183-1w).